The sequence spans 234 residues: Ribonuclease 3 (234 aa).

The region spanning 6–134 (RKSLEERVGH…IVGALYLDGG (129 aa)) is the RNase III domain. Glu-47 serves as a coordination point for Mg(2+). Asp-51 is a catalytic residue. 2 residues coordinate Mg(2+): Ser-120 and Glu-123. Residue Glu-123 is part of the active site. Residues 162 to 231 (DYKTRLQELV…AKNALEMKYK (70 aa)) enclose the DRBM domain.

It belongs to the ribonuclease III family. In terms of assembly, homodimer. Mg(2+) is required as a cofactor.

The protein resides in the cytoplasm. The enzyme catalyses Endonucleolytic cleavage to 5'-phosphomonoester.. Functionally, digests double-stranded RNA. Involved in the processing of primary rRNA transcript to yield the immediate precursors to the large and small rRNAs (23S and 16S). Processes some mRNAs, and tRNAs when they are encoded in the rRNA operon. Processes pre-crRNA and tracrRNA of type II CRISPR loci if present in the organism. The chain is Ribonuclease 3 from Bdellovibrio bacteriovorus (strain ATCC 15356 / DSM 50701 / NCIMB 9529 / HD100).